The following is a 369-amino-acid chain: Cobalt-precorrin-5B C(1)-methyltransferase (369 aa).

It belongs to the CbiD family.

The catalysed reaction is Co-precorrin-5B + S-adenosyl-L-methionine = Co-precorrin-6A + S-adenosyl-L-homocysteine. It participates in cofactor biosynthesis; adenosylcobalamin biosynthesis; cob(II)yrinate a,c-diamide from sirohydrochlorin (anaerobic route): step 6/10. Catalyzes the methylation of C-1 in cobalt-precorrin-5B to form cobalt-precorrin-6A. This chain is Cobalt-precorrin-5B C(1)-methyltransferase, found in Leptospira borgpetersenii serovar Hardjo-bovis (strain JB197).